Consider the following 179-residue polypeptide: Large ribosomal subunit protein uL5 (179 aa).

This sequence belongs to the universal ribosomal protein uL5 family. Part of the 50S ribosomal subunit; part of the 5S rRNA/L5/L18/L25 subcomplex. Contacts the 5S rRNA and the P site tRNA. Forms a bridge to the 30S subunit in the 70S ribosome.

Functionally, this is one of the proteins that bind and probably mediate the attachment of the 5S RNA into the large ribosomal subunit, where it forms part of the central protuberance. In the 70S ribosome it contacts protein S13 of the 30S subunit (bridge B1b), connecting the 2 subunits; this bridge is implicated in subunit movement. Contacts the P site tRNA; the 5S rRNA and some of its associated proteins might help stabilize positioning of ribosome-bound tRNAs. The polypeptide is Large ribosomal subunit protein uL5 (Bacillus cereus (strain Q1)).